Consider the following 482-residue polypeptide: MANQRMLGFVHTAQRMPDKRPAAERRQDFAEIYARFSDERANEQANRCSQCGVPFCQVHCPVSNNIPDWLKLTSEGRLEEAYEVSQATNNFPEICGRICPQDRLCEGNCVIEQSTHGAVTIGSVEKYINDTAWDQGWVKPRTPSRELGLSVGVIGAGPAGLAAAEELRAKGYEVHVYDRYDRMGGLLVYGIPGFKLEKSVVERRVKLLADAGVIYHPNFEVGRDASLPELRRKHVAVLVATGVYKARDIKAPGSGLGNIVAALDYLTTSNKVSLGDTVEAYENGSLNAAGKHVVVLGGGDTAMDCVRTAIRQGATSVKCLYRRDRKNMPGSQREVAHAEEEGVEFIWQAAPEGFTGDTVVTGVRAVRIHLGVADATGRQTPQVIEGSEFTVQADLVIKALGFEPEDLPNAFDEPELKVTRWGTLLVDHRTKMTNMDGVFAAGDIVRGASLVVWAIRDGRDAAEGIHAYAKAKAEAPVAVAAE.

The 34-residue stretch at 39 to 72 (ERANEQANRCSQCGVPFCQVHCPVSNNIPDWLKL) folds into the 4Fe-4S ferredoxin-type domain. [4Fe-4S] cluster is bound by residues Cys-95, Cys-99, Cys-105, and Cys-109.

Aggregate of 4 catalytic active heterodimers, consisting of a large and a small subunit. The cofactor is [4Fe-4S] cluster.

The catalysed reaction is 2 L-glutamate + NADP(+) = L-glutamine + 2-oxoglutarate + NADPH + H(+). It participates in amino-acid biosynthesis; L-glutamate biosynthesis via GLT pathway; L-glutamate from 2-oxoglutarate and L-glutamine (NADP(+) route): step 1/1. Its pathway is energy metabolism; nitrogen metabolism. The sequence is that of Glutamate synthase [NADPH] small chain (gltD) from Azospirillum brasilense.